The chain runs to 70 residues: Conotoxin Cl9.1 (70 aa).

The signal sequence occupies residues 1–20 (MMGKLGVVLFICLVLFPLET). Positions 21–50 (LQLEGGQQADRHVDQLEGNPNRETRTIEVR) are excised as a propeptide. Cystine bridges form between Cys51–Cys63, Cys56–Cys67, and Cys61–Cys70.

It belongs to the conotoxin M superfamily. As to expression, expressed by the venom duct.

Its subcellular location is the secreted. The sequence is that of Conotoxin Cl9.1 from Californiconus californicus (California cone).